The chain runs to 461 residues: Protein KlcB (461 aa).

2 disordered regions span residues 84–107 and 349–379; these read PEAT…TEDK and RAKA…EDAP. The span at 91 to 101 shows a compositional bias: basic residues; sequence ARRRTKARKSK. Residues 357–377 are compositionally biased toward basic and acidic residues; sequence GQRREPVTPAKPEPEPAKDED.

The sequence is that of Protein KlcB (klcB) from Escherichia coli.